The following is a 237-amino-acid chain: CDP-diacylglycerol--serine O-phosphatidyltransferase (237 aa).

The next 8 membrane-spanning stretches (helical) occupy residues 3–23 (INPL…LGMM), 25–45 (IFYA…ASLI), 73–93 (VIAF…YNFG), 95–115 (IGMA…ARFN), 124–144 (YSFI…CVLL), 150–170 (FLEG…GVLM), 184–204 (WNLK…VRPL), and 207–227 (LSVF…FLMV).

The protein belongs to the CDP-alcohol phosphatidyltransferase class-I family.

Its subcellular location is the cell membrane. The enzyme catalyses a CDP-1,2-diacyl-sn-glycerol + L-serine = a 1,2-diacyl-sn-glycero-3-phospho-L-serine + CMP + H(+). In Helicobacter pylori (strain ATCC 700392 / 26695) (Campylobacter pylori), this protein is CDP-diacylglycerol--serine O-phosphatidyltransferase (pssA).